The primary structure comprises 423 residues: Kynureninase (423 aa).

Residues leucine 105, serine 106, 133-136 (FPSD), aspartate 218, histidine 221, and tyrosine 243 contribute to the pyridoxal 5'-phosphate site. N6-(pyridoxal phosphate)lysine is present on lysine 244. Pyridoxal 5'-phosphate-binding residues include tryptophan 273 and asparagine 301.

The protein belongs to the kynureninase family. In terms of assembly, homodimer. It depends on pyridoxal 5'-phosphate as a cofactor.

The enzyme catalyses L-kynurenine + H2O = anthranilate + L-alanine + H(+). The catalysed reaction is 3-hydroxy-L-kynurenine + H2O = 3-hydroxyanthranilate + L-alanine + H(+). Its pathway is amino-acid degradation; L-kynurenine degradation; L-alanine and anthranilate from L-kynurenine: step 1/1. The protein operates within cofactor biosynthesis; NAD(+) biosynthesis; quinolinate from L-kynurenine: step 2/3. Catalyzes the cleavage of L-kynurenine (L-Kyn) and L-3-hydroxykynurenine (L-3OHKyn) into anthranilic acid (AA) and 3-hydroxyanthranilic acid (3-OHAA), respectively. The chain is Kynureninase from Xanthomonas oryzae pv. oryzae (strain MAFF 311018).